A 267-amino-acid chain; its full sequence is NAD kinase (267 aa).

Residue Asp-45 is the Proton acceptor of the active site. NAD(+) contacts are provided by residues 45–46, 123–124, Arg-149, Asp-151, Ala-186, and Asn-226; these read DG and NE.

It belongs to the NAD kinase family. Requires a divalent metal cation as cofactor.

It localises to the cytoplasm. The catalysed reaction is NAD(+) + ATP = ADP + NADP(+) + H(+). Involved in the regulation of the intracellular balance of NAD and NADP, and is a key enzyme in the biosynthesis of NADP. Catalyzes specifically the phosphorylation on 2'-hydroxyl of the adenosine moiety of NAD to yield NADP. This is NAD kinase from Shouchella clausii (strain KSM-K16) (Alkalihalobacillus clausii).